A 548-amino-acid polypeptide reads, in one-letter code: Nonribosomal peptide synthetase 8 (548 aa).

Residues 1–77 (MNSLDQWRDT…QLRGENRSGP (77 aa)) form the Carrier domain. At Ser35 the chain carries O-(pantetheine 4'-phosphoryl)serine. The tract at residues 122-537 (MAPISSIQEF…FKSLIAELAA (416 aa)) is condensation.

Belongs to the NRP synthetase family.

It functions in the pathway mycotoxin biosynthesis. In terms of biological role, nonribosomal peptide synthetase; part of the gene cluster that mediates the biosynthesis of fumonisins B1 (FB1), B2 (FB2), B3 (FB3), and B4 (FB4), which are carcinogenic mycotoxins. Within the pathway FUM14 catalyzes esterification of CoA-activated tricarballylic acid to the C-14 and C-15 hydroxyls of the fumonisin backbone. The biosynthesis starts with the FUM1-catalyzed carbon chain assembly from one molecule of acetyl-CoA, eight molecules of malonyl-CoA, and two molecules of methionine (in S-adenosyl form). The C18 polyketide chain is released from the enzyme by a nucleophilic attack of a carbanion, which is derived from R-carbon of alanine by decarboxylation, on the carbonyl carbon of polyketide acyl chain. This step is catalyzed by the pyridoxal 5'-phosphate-dependent aminoacyl transferase FUM8. The resultant 3-keto intermediate is then stereospecifically reduced to a 3-hydroxyl product by reductase FUM13. Subsequent oxidations at C-10 by the cytochrome P450 monooxygenase FUM2, C-14 and C-15 by FUM6, FUM12 or FUM15, tricarballylic esterification of the hydroxyl groups on C-14 and C-15 by acyltransferase FUM14, and C-5 hydroxylation by 2-keto-glutarate-dependent dioxygenase FUM3 furnish the biosynthesis of fumonisins. The tricarballylic moieties are most likely derived from the citric acid cycle, and their addition to the carbon backbone may involve FUM7, FUM10, FUM11 and FUM14. The sequence is that of Nonribosomal peptide synthetase 8 from Gibberella moniliformis (strain M3125 / FGSC 7600) (Maize ear and stalk rot fungus).